The primary structure comprises 475 residues: Kynureninase (475 aa).

Pyridoxal 5'-phosphate-binding positions include leucine 141, threonine 142, 169-172, aspartate 254, histidine 257, and tyrosine 279; that span reads FPSD. At lysine 280 the chain carries N6-(pyridoxal phosphate)lysine. Residues tryptophan 319 and asparagine 347 each coordinate pyridoxal 5'-phosphate.

It belongs to the kynureninase family. As to quaternary structure, homodimer. Pyridoxal 5'-phosphate is required as a cofactor.

The protein resides in the cytoplasm. The catalysed reaction is L-kynurenine + H2O = anthranilate + L-alanine + H(+). It carries out the reaction 3-hydroxy-L-kynurenine + H2O = 3-hydroxyanthranilate + L-alanine + H(+). Its pathway is amino-acid degradation; L-kynurenine degradation; L-alanine and anthranilate from L-kynurenine: step 1/1. The protein operates within cofactor biosynthesis; NAD(+) biosynthesis; quinolinate from L-kynurenine: step 2/3. In terms of biological role, catalyzes the cleavage of L-kynurenine (L-Kyn) and L-3-hydroxykynurenine (L-3OHKyn) into anthranilic acid (AA) and 3-hydroxyanthranilic acid (3-OHAA), respectively. The sequence is that of Kynureninase (bna5) from Sclerotinia sclerotiorum (strain ATCC 18683 / 1980 / Ss-1) (White mold).